Consider the following 315-residue polypeptide: Ribosomal RNA small subunit methyltransferase H (315 aa).

Residues 35 to 37, Asp55, Phe80, Asp102, and Gln109 contribute to the S-adenosyl-L-methionine site; that span reads GGH.

It belongs to the methyltransferase superfamily. RsmH family.

It localises to the cytoplasm. The catalysed reaction is cytidine(1402) in 16S rRNA + S-adenosyl-L-methionine = N(4)-methylcytidine(1402) in 16S rRNA + S-adenosyl-L-homocysteine + H(+). In terms of biological role, specifically methylates the N4 position of cytidine in position 1402 (C1402) of 16S rRNA. This Buchnera aphidicola subsp. Baizongia pistaciae (strain Bp) protein is Ribosomal RNA small subunit methyltransferase H.